Here is a 782-residue protein sequence, read N- to C-terminus: Lysosome membrane protein 2-C (782 aa).

The Cytoplasmic segment spans residues 1–7 (MVANNKG). A helical membrane pass occupies residues 8-28 (LLIAGLLLSVIGAALFVISLA). Over 29 to 739 (LLPSVLNVAT…QQFKQIQTVK (711 aa)) the chain is Lumenal. N-linked (GlcNAc...) asparagine glycans are attached at residues N77, N105, N191, N219, N234, N243, N281, N368, N387, N401, N427, N432, N451, N465, N501, N536, N540, N595, N605, N613, N646, and N692. The helical transmembrane segment at 740–760 (IAPVVVVSIFGGILLIAGLVM) threads the bilayer. Topologically, residues 761–782 (AINGFRKTFYNNNQYNGYNIIN) are cytoplasmic. The short motif at 777–781 (GYNII) is the Tyrosine-type lysosomal sorting signal element.

Belongs to the CD36 family. In terms of processing, heavily glycosylated.

Its subcellular location is the lysosome membrane. In terms of biological role, may act as a lysosomal receptor. May be involved role in macropinocytosis and fluid phase exocytosis. The sequence is that of Lysosome membrane protein 2-C (lmpC) from Dictyostelium discoideum (Social amoeba).